We begin with the raw amino-acid sequence, 317 residues long: Melanocyte-stimulating hormone receptor (317 aa).

Topologically, residues 1–37 (MPVQGSQRRLLGSLNSTPTATPHLGLAANQTGARCLE) are extracellular. Asn29 carries an N-linked (GlcNAc...) asparagine glycan. A helical transmembrane segment spans residues 38-63 (VSIPDGLFLSLGLVSLVENVLVVTAI). The Cytoplasmic segment spans residues 64-72 (AKNRNLHSP). A helical transmembrane segment spans residues 73–93 (MYCFICCLALSDLLVSGSNML). Residues 94–118 (ETAVILLLEAGALAARAAVVQQLDN) lie on the Extracellular side of the membrane. The chain crosses the membrane as a helical span at residues 119–140 (VIDVITCSSMLSSLCFLGAIAV). The Cytoplasmic portion of the chain corresponds to 141–163 (DRYISIFYALRYHSIVTLPRARR). The chain crosses the membrane as a helical span at residues 164–183 (AVAAIWVASVLFSMLFIAYY). The Extracellular segment spans residues 184-191 (DHAAVLLC). Residues 192 to 211 (LVVFFLAMLVLMAVLYVHML) form a helical membrane-spanning segment. Residues 212-240 (ARACQHAQGIARLHKRQRPAHQSFGLKGA) are Cytoplasmic-facing. Residues 241-266 (ATLTILLGIFFLCWGPFFLHLTLIVL) traverse the membrane as a helical segment. Over 267 to 279 (CPQHPTCSCIFKN) the chain is Extracellular. A helical transmembrane segment spans residues 280-300 (FNLFLTLIICNAIIDPLIYAF). Over 301 to 317 (RSQELRRTLKEVLLCSW) the chain is Cytoplasmic. The S-palmitoyl cysteine moiety is linked to residue Cys315.

It belongs to the G-protein coupled receptor 1 family. In terms of assembly, interacts with MGRN1, but does not undergo MGRN1-mediated ubiquitination; this interaction competes with GNAS-binding and thus inhibits agonist-induced cAMP production. Interacts with OPN3; the interaction results in a decrease in MC1R-mediated cAMP signaling and ultimately a decrease in melanin production in melanocytes.

It localises to the cell membrane. Its function is as follows. Receptor for MSH (alpha, beta and gamma) and ACTH. The activity of this receptor is mediated by G proteins which activate adenylate cyclase. Mediates melanogenesis, the production of eumelanin (black/brown) and phaeomelanin (red/yellow), via regulation of cAMP signaling in melanocytes. The sequence is that of Melanocyte-stimulating hormone receptor (MC1R) from Erythrocebus patas (Red guenon).